The primary structure comprises 231 residues: NADH-ubiquinone oxidoreductase chain 4 (231 aa).

6 helical membrane-spanning segments follow: residues 1-21 (PIAG…YGII), 34-54 (MFIP…LTCL), 63-85 (IAYS…TPWG), 89-111 (AMAL…NTTY), 128-148 (ILPM…AMPP), and 169-189 (TIIM…HMFL).

It belongs to the complex I subunit 4 family.

Its subcellular location is the mitochondrion membrane. It carries out the reaction a ubiquinone + NADH + 5 H(+)(in) = a ubiquinol + NAD(+) + 4 H(+)(out). Its function is as follows. Core subunit of the mitochondrial membrane respiratory chain NADH dehydrogenase (Complex I) that is believed to belong to the minimal assembly required for catalysis. Complex I functions in the transfer of electrons from NADH to the respiratory chain. The immediate electron acceptor for the enzyme is believed to be ubiquinone. This Lachesis muta muta (Bushmaster) protein is NADH-ubiquinone oxidoreductase chain 4 (MT-ND4).